Consider the following 458-residue polypeptide: MITGDSIDGMDFISSLPDEILHHILSSVPTKSAIRTSLLSKRWRYVWSETPSLSIDCRRADPNSIDKTLSFFSAPKITSFHLHTTLLNRIDSVNGCIEFAISHNAEKLSLESRDYRVRNYKFPDFFYTNSSVKQLFVDSGSVHLIPRCTVSWTSLKNLSLSNCTLSDESFLKILSGSPLLESLELLYCAEYMCLDLSQSQHLRRLEIDRSDWFMGPTKIVAPHLHCLRLRHSRLPCSLVDVSSLTEADLNIYFGDLKTVTAGFLQHNVVKMLQMLQNVEKLTIGGTFLQMLSLAALCGVPFPTLKVKTLTLETMIIRSVIPGITKLLRYTPGLRKLTIHTVKCSSISELHLNDYLRKHSLNQRQCWRSKDSVFPGSLETISMLASKHAESNLVALFMERLLKSTKSLETMVVLLVDYLDALGFEELLAMATTLSHNNDVSVLIKRSYIKYVSNTFPQR.

An F-box domain is found at 10–56 (MDFISSLPDEILHHILSSVPTKSAIRTSLLSKRWRYVWSETPSLSID). LRR repeat units follow at residues 57–84 (CRRA…HLHT), 86–112 (LLNR…SLES), 133–161 (KQLF…LSLS), 162–187 (NCTL…ELLY), 226–251 (CLRL…DLNI), 260–285 (TAGF…TIGG), 325–353 (KLLR…HLND), and 389–414 (ESNL…VVLL).

The chain is F-box/LRR-repeat protein At5g02910 from Arabidopsis thaliana (Mouse-ear cress).